Here is a 244-residue protein sequence, read N- to C-terminus: Krueppel-like factor 9 (244 aa).

Disordered stretches follow at residues 26-51 (EHGGAPEAERLRLPEREVTKEHGDPG) and 79-143 (PSVC…EKRH). The span at 32 to 51 (EAERLRLPEREVTKEHGDPG) shows a compositional bias: basic and acidic residues. Ser122 carries the post-translational modification Phosphoserine. Residues 134-143 (KGKHASEKRH) show a composition bias toward basic residues. 3 C2H2-type zinc fingers span residues 143–167 (HKCPYSGCGKVYGKSSHLKAHYRVH), 173–197 (FPCTWPDCLKKFSRSDELTRHYRTH), and 203–225 (FRCPLCEKRFMRSDHLTKHARRH).

Belongs to the Sp1 C2H2-type zinc-finger protein family. In terms of assembly, interacts with ZZEF1.

The protein localises to the nucleus. Its function is as follows. Transcription factor that binds to GC box promoter elements. Selectively activates mRNA synthesis from genes containing tandem repeats of GC boxes but represses genes with a single GC box. Acts as an epidermal circadian transcription factor regulating keratinocyte proliferation. The chain is Krueppel-like factor 9 (Klf9) from Mus musculus (Mouse).